We begin with the raw amino-acid sequence, 591 residues long: Proteasome-associated ATPase (591 aa).

Residues 10-77 (VAAAEELHAL…LREEVDRLGQ (68 aa)) adopt a coiled-coil conformation. 278-283 (GCGKTL) is an ATP binding site. A docks into pockets in the proteasome alpha-ring region spans residues 590–591 (YL).

Belongs to the AAA ATPase family. As to quaternary structure, homohexamer. Assembles into a hexameric ring structure that likely caps the 20S proteasome core. Can form a complex composed of two stacked hexameric rings in vitro. Probably interacts with the prokaryotic ubiquitin-like protein Pup through a hydrophobic interface; the expected interacting region of ARC lies in its N-terminal coiled-coil domain. There is likely one Pup binding site per ARC hexamer ring. Upon ATP-binding, the C-terminus of ARC probably interacts with the alpha-rings of the proteasome core, possibly by binding to the intersubunit pockets.

It functions in the pathway protein degradation; proteasomal Pup-dependent pathway. Its activity is regulated as follows. ATPase activity is inhibited by N-ethylmaleimide (NEM) but not by sodium azide. Its function is as follows. ATPase which is responsible for recognizing, binding, unfolding and translocation of pupylated proteins into the bacterial 20S proteasome core particle. May be essential for opening the gate of the 20S proteasome via an interaction with its C-terminus, thereby allowing substrate entry and access to the site of proteolysis. Thus, the C-termini of the proteasomal ATPase may function like a 'key in a lock' to induce gate opening and therefore regulate proteolysis. This chain is Proteasome-associated ATPase, found in Rhodococcus erythropolis (Arthrobacter picolinophilus).